The chain runs to 314 residues: Acetyl-coenzyme A carboxylase carboxyl transferase subunit beta (314 aa).

The 270-residue stretch at 24-293 (LWIKCPDTGQ…IDAAPEPSPA (270 aa)) folds into the CoA carboxyltransferase N-terminal domain. Positions 283-314 (EIDAAPEPSPAAEEPAEPMPAPEAAAPSAPPA) are disordered. 2 stretches are compositionally biased toward low complexity: residues 284–295 (IDAAPEPSPAAE) and 304–314 (PEAAAPSAPPA).

This sequence belongs to the AccD/PCCB family. Acetyl-CoA carboxylase is a heterohexamer composed of biotin carboxyl carrier protein (AccB), biotin carboxylase (AccC) and two subunits each of ACCase subunit alpha (AccA) and ACCase subunit beta (AccD).

Its subcellular location is the cytoplasm. The catalysed reaction is N(6)-carboxybiotinyl-L-lysyl-[protein] + acetyl-CoA = N(6)-biotinyl-L-lysyl-[protein] + malonyl-CoA. It functions in the pathway lipid metabolism; malonyl-CoA biosynthesis; malonyl-CoA from acetyl-CoA: step 1/1. Component of the acetyl coenzyme A carboxylase (ACC) complex. Biotin carboxylase (BC) catalyzes the carboxylation of biotin on its carrier protein (BCCP) and then the CO(2) group is transferred by the transcarboxylase to acetyl-CoA to form malonyl-CoA. The protein is Acetyl-coenzyme A carboxylase carboxyl transferase subunit beta of Nitrobacter hamburgensis (strain DSM 10229 / NCIMB 13809 / X14).